Here is a 346-residue protein sequence, read N- to C-terminus: Histidinol-phosphate aminotransferase (346 aa).

Position 206 is an N6-(pyridoxal phosphate)lysine (Lys-206).

This sequence belongs to the class-II pyridoxal-phosphate-dependent aminotransferase family. Histidinol-phosphate aminotransferase subfamily. In terms of assembly, homodimer. The cofactor is pyridoxal 5'-phosphate.

It carries out the reaction L-histidinol phosphate + 2-oxoglutarate = 3-(imidazol-4-yl)-2-oxopropyl phosphate + L-glutamate. Its pathway is amino-acid biosynthesis; L-histidine biosynthesis; L-histidine from 5-phospho-alpha-D-ribose 1-diphosphate: step 7/9. This Bacteroides thetaiotaomicron (strain ATCC 29148 / DSM 2079 / JCM 5827 / CCUG 10774 / NCTC 10582 / VPI-5482 / E50) protein is Histidinol-phosphate aminotransferase.